A 688-amino-acid chain; its full sequence is PTS system glucoside-specific EIICBA component (688 aa).

In terms of domain architecture, PTS EIIC type-1 spans 3–427 (KKLFGQLQRI…FKLKTPGRED (425 aa)). 10 consecutive transmembrane segments (helical) span residues 12 to 32 (IGKALMLPVAILPAAGILLAF), 81 to 101 (LGLAGGDGVAALAALVGYLIM), 137 to 157 (LVLGIPTLQTGVFGGIIMGAL), 182 to 202 (FVPIVTSVVAIATGVLLSFAW), 223 to 243 (LTTFIFGIIERSLIPFGLHHI), 284 to 304 (AFTTGKYPFMMFGLPAAAFAI), 315 to 335 (VVGGLMLSAGLTAFLTGITEP), 340 to 360 (FLFVAPVLYGIHVLLAGTSFL), 364 to 384 (LLGVKIGMTFSGGFIDYILYG), and 395 to 415 (LVIPVGIVYAIVYYFLFDFAI). In terms of domain architecture, PTS EIIB type-1 spans 438 to 519 (AKLPFDVLDA…AKIMSGEITK (82 aa)). Cys460 acts as the Phosphocysteine intermediate; for EIIB activity in catalysis. The 105-residue stretch at 560 to 664 (DQVFAGKMMG…SIVTPMIITN (105 aa)) folds into the PTS EIIA type-1 domain. His612 functions as the Tele-phosphohistidine intermediate; for EIIA activity in the catalytic mechanism.

Its subcellular location is the cell membrane. Functionally, the phosphoenolpyruvate-dependent sugar phosphotransferase system (sugar PTS), a major carbohydrate active -transport system, catalyzes the phosphorylation of incoming sugar substrates concomitantly with their translocation across the cell membrane. This system is involved in alpha- and beta-glucoside transport. This is PTS system glucoside-specific EIICBA component (glcB) from Staphylococcus aureus (strain Mu3 / ATCC 700698).